A 137-amino-acid polypeptide reads, in one-letter code: uncharacterized protein (137 aa).

Belongs to the ycf72 family.

It localises to the plastid. The protein resides in the chloroplast. This is an uncharacterized protein from Oryza nivara (Indian wild rice).